Consider the following 543-residue polypeptide: Chaperonin GroEL 1 (543 aa).

Residues 30–33, K51, 87–91, G415, and D496 each bind ATP; these read TLGP and DGTTT.

The protein belongs to the chaperonin (HSP60) family. Forms a cylinder of 14 subunits composed of two heptameric rings stacked back-to-back. Interacts with the co-chaperonin GroES.

It is found in the cytoplasm. It catalyses the reaction ATP + H2O + a folded polypeptide = ADP + phosphate + an unfolded polypeptide.. Together with its co-chaperonin GroES, plays an essential role in assisting protein folding. The GroEL-GroES system forms a nano-cage that allows encapsulation of the non-native substrate proteins and provides a physical environment optimized to promote and accelerate protein folding. The polypeptide is Chaperonin GroEL 1 (Mesorhizobium japonicum (strain LMG 29417 / CECT 9101 / MAFF 303099) (Mesorhizobium loti (strain MAFF 303099))).